The chain runs to 66 residues: ATP synthase F(0) complex subunit 8 (66 aa).

A helical transmembrane segment spans residues 8–24 (IWLLAVVIVLTTLMIFL). At K54 the chain carries N6-acetyllysine; alternate. An N6-succinyllysine; alternate modification is found at K54. At K57 the chain carries N6-acetyllysine.

It belongs to the ATPase protein 8 family. Component of the ATP synthase complex composed at least of ATP5F1A/subunit alpha, ATP5F1B/subunit beta, ATP5MC1/subunit c (homooctomer), MT-ATP6/subunit a, MT-ATP8/subunit 8, ATP5ME/subunit e, ATP5MF/subunit f, ATP5MG/subunit g, ATP5MK/subunit k, ATP5MJ/subunit j, ATP5F1C/subunit gamma, ATP5F1D/subunit delta, ATP5F1E/subunit epsilon, ATP5PF/subunit F6, ATP5PB/subunit b, ATP5PD/subunit d, ATP5PO/subunit OSCP. ATP synthase complex consists of a soluble F(1) head domain (subunits alpha(3) and beta(3)) - the catalytic core - and a membrane F(0) domain - the membrane proton channel (subunits c, a, 8, e, f, g, k and j). These two domains are linked by a central stalk (subunits gamma, delta, and epsilon) rotating inside the F1 region and a stationary peripheral stalk (subunits F6, b, d, and OSCP). Interacts with PRICKLE3.

It is found in the mitochondrion membrane. Its function is as follows. Subunit 8, of the mitochondrial membrane ATP synthase complex (F(1)F(0) ATP synthase or Complex V) that produces ATP from ADP in the presence of a proton gradient across the membrane which is generated by electron transport complexes of the respiratory chain. ATP synthase complex consist of a soluble F(1) head domain - the catalytic core - and a membrane F(1) domain - the membrane proton channel. These two domains are linked by a central stalk rotating inside the F(1) region and a stationary peripheral stalk. During catalysis, ATP synthesis in the catalytic domain of F(1) is coupled via a rotary mechanism of the central stalk subunits to proton translocation. In vivo, can only synthesize ATP although its ATP hydrolase activity can be activated artificially in vitro. Part of the complex F(0) domain. The chain is ATP synthase F(0) complex subunit 8 from Loxodonta africana (African elephant).